The sequence spans 269 residues: MSSLNQDQIKTLEQSRQRLIQLTHSLASLITSLNQSDPLPSWTSLQSQATIISNNLLTISDHLSDNRDLLSNIVAYPDASYPSRVPANNVALEQVLRTKLDPRVEDWVARGRRAGAPTTSSDAGAGALGQYQTSSGQRLLSDDAIAELWDWAPVAANEEARKRNWGGNYTLEEREMGIENVVTGLSRVLEDDDEEDESDSEEGEGEADEMEVVGARRRSGAGAGLEFDIAAANTGSGANAGAGAKVVAPVVPLDEILRFMTTGAVPGQR.

The interval 187–217 (RVLEDDDEEDESDSEEGEGEADEMEVVGARR) is disordered. Residues 190–211 (EDDDEEDESDSEEGEGEADEME) show a composition bias toward acidic residues.

This sequence belongs to the Mediator complex subunit 8 family. As to quaternary structure, component of the Mediator complex.

The protein resides in the nucleus. Functionally, component of the Mediator complex, a coactivator involved in the regulated transcription of nearly all RNA polymerase II-dependent genes. Mediator functions as a bridge to convey information from gene-specific regulatory proteins to the basal RNA polymerase II transcription machinery. Mediator is recruited to promoters by direct interactions with regulatory proteins and serves as a scaffold for the assembly of a functional preinitiation complex with RNA polymerase II and the general transcription factors. In Aspergillus niger (strain ATCC MYA-4892 / CBS 513.88 / FGSC A1513), this protein is Mediator of RNA polymerase II transcription subunit 8 (med8).